Consider the following 81-residue polypeptide: Exodeoxyribonuclease 7 small subunit (81 aa).

Belongs to the XseB family. As to quaternary structure, heterooligomer composed of large and small subunits.

Its subcellular location is the cytoplasm. It carries out the reaction Exonucleolytic cleavage in either 5'- to 3'- or 3'- to 5'-direction to yield nucleoside 5'-phosphates.. In terms of biological role, bidirectionally degrades single-stranded DNA into large acid-insoluble oligonucleotides, which are then degraded further into small acid-soluble oligonucleotides. The polypeptide is Exodeoxyribonuclease 7 small subunit (Pasteurella multocida (strain Pm70)).